Reading from the N-terminus, the 119-residue chain is Holo-[acyl-carrier-protein] synthase (119 aa).

Aspartate 8 and glutamate 58 together coordinate Mg(2+).

It belongs to the P-Pant transferase superfamily. AcpS family. Requires Mg(2+) as cofactor.

The protein localises to the cytoplasm. The catalysed reaction is apo-[ACP] + CoA = holo-[ACP] + adenosine 3',5'-bisphosphate + H(+). Transfers the 4'-phosphopantetheine moiety from coenzyme A to a Ser of acyl-carrier-protein. The sequence is that of Holo-[acyl-carrier-protein] synthase from Bacillus cereus (strain ZK / E33L).